The following is a 128-amino-acid chain: Glycine cleavage system H protein 2 (128 aa).

In terms of domain architecture, Lipoyl-binding spans 24-105 (TVTVGISDHA…PYSAWIFKVK (82 aa)). Lys65 carries the post-translational modification N6-lipoyllysine.

This sequence belongs to the GcvH family. The glycine cleavage system is composed of four proteins: P, T, L and H. (R)-lipoate serves as cofactor.

Its function is as follows. The glycine cleavage system catalyzes the degradation of glycine. The H protein shuttles the methylamine group of glycine from the P protein to the T protein. The protein is Glycine cleavage system H protein 2 of Pseudomonas syringae pv. tomato (strain ATCC BAA-871 / DC3000).